The chain runs to 378 residues: O-methyltransferase gsfD (378 aa).

Residues 219–220 (GG), Asp244, 266–267 (DM), and Arg282 contribute to the S-adenosyl-L-methionine site. His286 serves as the catalytic Proton acceptor.

Belongs to the class I-like SAM-binding methyltransferase superfamily. Cation-independent O-methyltransferase family.

It catalyses the reaction desmethyl-dehydrogriseofulvin + S-adenosyl-L-methionine = dehydrogriseofulvin + S-adenosyl-L-homocysteine + H(+). It functions in the pathway secondary metabolite biosynthesis; terpenoid biosynthesis. In terms of biological role, O-methyltransferase; part of the gene cluster that mediates the biosynthesis of griseofulvin, an important antifungal drug that has been in use for a long time for treating dermatophyte infections. The first step of the pathway is the formation of the heptaketide backbone by gsfA which is initiated by priming with acetyl-CoA, followed by sequential condensations of 6 malonyl-CoA units. The resulting benzophenone can undergo a spontaneous dehydration to form norlichexanthone. However, the true precursor for the griseofulvin biosynthesis is not norlichexanthone, but the heptaketide benzophenone that is O-methylated at 3-OH by gsfB to produce griseophenone D which is further methylated at 9-OH by gsfC to yield griseophenone C. Griseophenone C is then substrate of halogenase gsfI which is responsible for the regio-specific chlorination at the C13 position to form griseophenone B. The cytochrome P450 gsfF catalyzes the coupling of orcinol and phloroglucinol rings in griseophenone B to form desmethyl-dehydrogriseofulvin A which is further methylated at 5-OH by gsfD to yield dehydrogriseofulvin. Finally, gsfE performs stereospecific reduction of enone 18 of dehydrogriseofulvin to afford the final product griseofulvin. This is O-methyltransferase gsfD from Penicillium aethiopicum.